The chain runs to 204 residues: Protein GrpE (204 aa).

Basic and acidic residues predominate over residues 1–12; sequence MSNQEKKMHEEE. Residues 1-37 form a disordered region; it reads MSNQEKKMHEEELQQQETVEADTEAEAEAVGTDADIE.

The protein belongs to the GrpE family. Homodimer.

It is found in the cytoplasm. Functionally, participates actively in the response to hyperosmotic and heat shock by preventing the aggregation of stress-denatured proteins, in association with DnaK and GrpE. It is the nucleotide exchange factor for DnaK and may function as a thermosensor. Unfolded proteins bind initially to DnaJ; upon interaction with the DnaJ-bound protein, DnaK hydrolyzes its bound ATP, resulting in the formation of a stable complex. GrpE releases ADP from DnaK; ATP binding to DnaK triggers the release of the substrate protein, thus completing the reaction cycle. Several rounds of ATP-dependent interactions between DnaJ, DnaK and GrpE are required for fully efficient folding. The protein is Protein GrpE of Vibrio proteolyticus (Aeromonas proteolytica).